A 514-amino-acid polypeptide reads, in one-letter code: 2,3-bisphosphoglycerate-independent phosphoglycerate mutase (514 aa).

Asp13 and Ser69 together coordinate Mn(2+). The Phosphoserine intermediate role is filled by Ser69. Residues His128, 158–159 (RD), Arg189, Arg195, 263–266 (RADR), and Lys336 contribute to the substrate site. Mn(2+)-binding residues include Asp402, His406, Asp443, His444, and His461.

The protein belongs to the BPG-independent phosphoglycerate mutase family. As to quaternary structure, monomer. The cofactor is Mn(2+).

It carries out the reaction (2R)-2-phosphoglycerate = (2R)-3-phosphoglycerate. Its pathway is carbohydrate degradation; glycolysis; pyruvate from D-glyceraldehyde 3-phosphate: step 3/5. Catalyzes the interconversion of 2-phosphoglycerate and 3-phosphoglycerate. The protein is 2,3-bisphosphoglycerate-independent phosphoglycerate mutase of Akkermansia muciniphila (strain ATCC BAA-835 / DSM 22959 / JCM 33894 / BCRC 81048 / CCUG 64013 / CIP 107961 / Muc).